The sequence spans 51 residues: Light-harvesting protein B800/850/890 beta-2 chain (51 aa).

Residues 1–17 lie on the Cytoplasmic side of the membrane; that stretch reads ADEMRNVSDEEAKEFHA. A bacteriochlorophyll contacts are provided by histidine 16 and histidine 34. A helical transmembrane segment spans residues 18–40; sequence MFSQAFTVYVGVAVVAHILAWAW. Residues 41–51 are Periplasmic-facing; the sequence is RPWIPGDEGFG.

This sequence belongs to the antenna complex beta subunit family. The core complex is formed by different alpha and beta chains, binding bacteriochlorophyll molecules, and arranged most probably in tetrameric structures disposed around the reaction center. The non-pigmented gamma chains may constitute additional components.

The protein resides in the cell inner membrane. In terms of biological role, antenna complexes are light-harvesting systems, which transfer the excitation energy to the reaction centers. In Halorhodospira halophila (strain DSM 244 / SL1) (Ectothiorhodospira halophila (strain DSM 244 / SL1)), this protein is Light-harvesting protein B800/850/890 beta-2 chain.